The chain runs to 429 residues: MGYEKSIEAYKKAEQLMPGGVNSPVRAFKSVDMPAIFMDHGKGSKIYDIDGNEYIDYVLSWGPLILGHENPQVIENLHKAVDKGTSFGASTLEEIKLAELVIDRVPSIEKVRMVSSGTEATQDTIRLARGYTGRDKIVKFEGCYHGHSDSLLIKAGSGVATLGLPDSPGVPEGTAKSTITVPYNDLDAIRKAFELYGDDIAGVIVEPVAGNMGVVPPVEGFLQGLRDITNEYGSLLIFDEVMTGFRVGYNCAQGYFDVIPDLTCLGKVIGGGLPVGAFGGKKEIMDEIAPVGTIYQAGTLSGNPLAMTSGYETLSQLTPESYEYFNELGDMLEDGLKKVAAKHNVPMTVNRAGSMIGYFLNDGPVTNFEQANKSDLKLFSEMYREMAKEGVFLPPSQFEGTFLSTAHTKEDIERTIEAFDKTFERITNK.

Lys-267 is subject to N6-(pyridoxal phosphate)lysine.

This sequence belongs to the class-III pyridoxal-phosphate-dependent aminotransferase family. HemL subfamily. In terms of assembly, homodimer. Pyridoxal 5'-phosphate is required as a cofactor.

It is found in the cytoplasm. It carries out the reaction (S)-4-amino-5-oxopentanoate = 5-aminolevulinate. Its pathway is porphyrin-containing compound metabolism; protoporphyrin-IX biosynthesis; 5-aminolevulinate from L-glutamyl-tRNA(Glu): step 2/2. In Staphylococcus carnosus (strain TM300), this protein is Glutamate-1-semialdehyde 2,1-aminomutase 1.